Consider the following 141-residue polypeptide: Nucleoside diphosphate kinase (141 aa).

ATP contacts are provided by Lys-11, Phe-59, Arg-87, Thr-93, Arg-104, and Asn-114. The Pros-phosphohistidine intermediate role is filled by His-117.

This sequence belongs to the NDK family. Homotetramer. It depends on Mg(2+) as a cofactor.

The protein localises to the cytoplasm. The catalysed reaction is a 2'-deoxyribonucleoside 5'-diphosphate + ATP = a 2'-deoxyribonucleoside 5'-triphosphate + ADP. The enzyme catalyses a ribonucleoside 5'-diphosphate + ATP = a ribonucleoside 5'-triphosphate + ADP. Its function is as follows. Major role in the synthesis of nucleoside triphosphates other than ATP. The ATP gamma phosphate is transferred to the NDP beta phosphate via a ping-pong mechanism, using a phosphorylated active-site intermediate. The sequence is that of Nucleoside diphosphate kinase from Burkholderia thailandensis (strain ATCC 700388 / DSM 13276 / CCUG 48851 / CIP 106301 / E264).